Consider the following 117-residue polypeptide: Ubiquitin-like protein 3 (117 aa).

Residues 10–88 (INLRLILVSG…PFGKTTVMHL (79 aa)) form the Ubiquitin-like domain. C113 carries the S-palmitoyl cysteine lipid modification. Residue C114 is modified to Cysteine methyl ester. C114 is lipidated: S-geranylgeranyl cysteine. Residues 115-117 (VIL) constitute a propeptide, removed in mature form.

The protein resides in the cell membrane. This chain is Ubiquitin-like protein 3 (Ubl3), found in Mus musculus (Mouse).